Consider the following 322-residue polypeptide: uncharacterized protein (322 aa).

2 stretches are compositionally biased toward basic residues: residues 1–16 (MPGN…KSGT) and 43–61 (LRPH…RRPV). The tract at residues 1–69 (MPGNSRRRGA…PVKRADETET (69 aa)) is disordered. S-adenosyl-L-methionine contacts are provided by glycine 261, isoleucine 281, and leucine 290.

The protein belongs to the class IV-like SAM-binding methyltransferase superfamily. RNA methyltransferase TrmH family.

This is an uncharacterized protein from Mycobacterium bovis (strain ATCC BAA-935 / AF2122/97).